We begin with the raw amino-acid sequence, 974 residues long: Ephrin type-B receptor 3 (974 aa).

The N-terminal stretch at 1–16 (MLPAVFVILALSAVQG) is a signal peptide. Residues 17–534 (LEETLMDTKW…RSSLQEQVPM (518 aa)) lie on the Extracellular side of the membrane. One can recognise an Eph LBD domain in the interval 18 to 196 (EETLMDTKWT…FFKKCPRTTA (179 aa)). Residues cysteine 60 and cysteine 178 are joined by a disulfide bond. Fibronectin type-III domains follow at residues 318–426 (VPSA…TNQA) and 427–522 (APSS…IAED). Residues asparagine 330 and asparagine 420 are each glycosylated (N-linked (GlcNAc...) asparagine). Residues 535-555 (VVGSVTAGLIFIIAVVIIVIV) form a helical membrane-spanning segment. Residues 556-974 (CFSRKQRNDS…QMSQTLPVQV (419 aa)) lie on the Cytoplasmic side of the membrane. Tyrosine 590 bears the Phosphotyrosine; by autocatalysis mark. One can recognise a Protein kinase domain in the interval 609-872 (VKIEEVIGAG…QIVSSLDKLI (264 aa)). Residues 615–623 (IGAGEFGEV) and lysine 641 contribute to the ATP site. Residue aspartate 734 is the Proton acceptor of the active site. An SAM domain is found at 901–965 (TTFPTVSDWL…LNSVQDMRLQ (65 aa)). Positions 972–974 (VQV) match the PDZ-binding motif.

The protein belongs to the protein kinase superfamily. Tyr protein kinase family. Ephrin receptor subfamily. As to quaternary structure, heterotetramer upon binding of the ligand. The heterotetramer is composed of an ephrin dimer and a receptor dimer. Oligomerization is probably required to induce biological responses. Phosphorylated. Autophosphorylates upon ligand-binding. Autophosphorylation on Tyr-590 is required for interaction with SH2 domain-containing proteins. As to expression, expressed in the embryo in pre-somitic mesoderm, caudal somites, midbrain, and cement gland. Most abundant in adult brain, eye, heart, lung and ovary. Lower levels in intestine, kidney, oviduct and pharynx.

It is found in the cell membrane. The protein resides in the cell projection. It localises to the dendrite. It carries out the reaction L-tyrosyl-[protein] + ATP = O-phospho-L-tyrosyl-[protein] + ADP + H(+). Its function is as follows. Receptor tyrosine kinase which binds promiscuously transmembrane ephrin-B family ligands residing on adjacent cells, leading to contact-dependent bidirectional signaling into neighboring cells. The signaling pathway downstream of the receptor is referred to as forward signaling while the signaling pathway downstream of the ephrin ligand is referred to as reverse signaling. Generally has an overlapping and redundant function with EPHB2. Like EPHB2, functions in axon guidance during development. In addition to its role in axon guidance also plays an important redundant role with other ephrin-B receptors in development and maturation of dendritic spines and the formation of excitatory synapses. May control other aspects of development through regulation of cell migration and positioning. This is Ephrin type-B receptor 3 (ephb3) from Xenopus laevis (African clawed frog).